Consider the following 149-residue polypeptide: Deoxyuridine 5'-triphosphate nucleotidohydrolase (149 aa).

Substrate is bound by residues arginine 68–glycine 70, asparagine 81, leucine 85–aspartate 87, and methionine 95.

Belongs to the dUTPase family. Requires Mg(2+) as cofactor.

It catalyses the reaction dUTP + H2O = dUMP + diphosphate + H(+). It participates in pyrimidine metabolism; dUMP biosynthesis; dUMP from dCTP (dUTP route): step 2/2. This enzyme is involved in nucleotide metabolism: it produces dUMP, the immediate precursor of thymidine nucleotides and it decreases the intracellular concentration of dUTP so that uracil cannot be incorporated into DNA. The sequence is that of Deoxyuridine 5'-triphosphate nucleotidohydrolase from Janthinobacterium sp. (strain Marseille) (Minibacterium massiliensis).